Consider the following 84-residue polypeptide: Small ribosomal subunit protein bS16 (84 aa).

Belongs to the bacterial ribosomal protein bS16 family.

The protein is Small ribosomal subunit protein bS16 of Methylococcus capsulatus (strain ATCC 33009 / NCIMB 11132 / Bath).